A 76-amino-acid chain; its full sequence is Probable small nuclear ribonucleoprotein G (76 aa).

The Sm domain occupies 4-76; the sequence is AHPPEVKKYM…IVMVEALDRV (73 aa).

This sequence belongs to the snRNP Sm proteins family. Interacts with the SMN complex. Core component of the spliceosomal U1, U2, U4 and U5 small nuclear ribonucleoproteins (snRNPs), the building blocks of the spliceosome. Most spliceosomal snRNPs contain a common set of Sm proteins, SNRPB, SNRPD1, SNRPD2, SNRPD3, SNRPE, SNRPF and SNRPG that assemble in a heptameric protein ring on the Sm site of the small nuclear RNA to form the core snRNP. Component of the U1 snRNP. Component of the U4/U6-U5 tri-snRNP complex. Component of the U7 snRNP complex. Component of the U11/U12 snRNPs that are part of the U12-type spliceosome.

The protein resides in the cytoplasm. It is found in the cytosol. Its subcellular location is the nucleus. Its function is as follows. Plays a role in pre-mRNA splicing as a core component of the spliceosomal U1, U2, U4 and U5 small nuclear ribonucleoproteins (snRNPs), the building blocks of the spliceosome. Component of both the pre-catalytic spliceosome B complex and activated spliceosome C complexes. Is also a component of the minor U12 spliceosome. The chain is Probable small nuclear ribonucleoprotein G from Drosophila melanogaster (Fruit fly).